The primary structure comprises 327 residues: GPI-linked NAD(P)(+)--arginine ADP-ribosyltransferase 1 (327 aa).

The first 22 residues, 1 to 22 (MWVPAVANLLLLSLGLLEAIQA), serve as a signal peptide directing secretion. Cystine bridges form between Cys-53–Cys-277 and Cys-174–Cys-224. Residue Asn-65 is glycosylated (N-linked (GlcNAc...) asparagine). Residues 73 to 273 (KVYADGWALA…IYLKALGKRS (201 aa)) enclose the TR mART core domain. 2 residues coordinate NAD(+): Tyr-121 and Arg-179. Active-site residues include Arg-179 and Ser-202. Ser-233 contacts NAD(+). Glu-240 is an active-site residue. Asn-253 carries N-linked (GlcNAc...) asparagine glycosylation. The GPI-anchor amidated serine moiety is linked to residue Ser-295. Residues 296-327 (ASAQERLSTAWSLLLLLAFLAVGPFPGSPGLF) constitute a propeptide, removed in mature form.

The protein belongs to the Arg-specific ADP-ribosyltransferase family. In terms of tissue distribution, primarily in skeletal and cardiac muscle.

The protein resides in the sarcoplasmic reticulum membrane. It catalyses the reaction L-arginyl-[protein] + NAD(+) = N(omega)-(ADP-D-ribosyl)-L-arginyl-[protein] + nicotinamide + H(+). Has ADP-ribosyltransferase activity toward GLP1R. The chain is GPI-linked NAD(P)(+)--arginine ADP-ribosyltransferase 1 (ART1) from Oryctolagus cuniculus (Rabbit).